Reading from the N-terminus, the 95-residue chain is Large ribosomal subunit protein eL43 (95 aa).

Residues 38–59 (CPDCGSEAVSREGTGIWQCGKC) form a C4-type zinc finger.

The protein belongs to the eukaryotic ribosomal protein eL43 family. Zn(2+) serves as cofactor.

The chain is Large ribosomal subunit protein eL43 from Halobacterium salinarum (strain ATCC 29341 / DSM 671 / R1).